The chain runs to 1101 residues: Rho GTPase-activating protein 30 (1101 aa).

A Rho-GAP domain is found at 20-215; the sequence is CDLREHLQHS…FILTHVDQLF (196 aa). Disordered stretches follow at residues 305 to 397 and 450 to 499; these read RKLP…VRAL and LQPR…LEDS. Over residues 309-319 the composition is skewed to basic and acidic residues; the sequence is LRVEDREEKSS. A compositionally biased stretch (low complexity) spans 348–367; the sequence is SSSSQPSSLMPESLESNSME. Over residues 451-465 the composition is skewed to pro residues; that stretch reads QPRPSPALGPGPPGS. The residue at position 578 (S578) is a Phosphoserine. Positions 622-848 are disordered; it reads LGPKPINWEG…EQKSIDVETE (227 aa). Composition is skewed to basic and acidic residues over residues 659 to 677, 686 to 762, 786 to 821, and 829 to 844; these read TRQE…REEA, EAGK…KGDD, EVVH…HSED, and DDRK…KSID. S875 carries the post-translational modification Phosphoserine. 2 disordered regions span residues 878-901 and 968-987; these read EINE…GMEA and CPRP…GSRA. At S996 the chain carries Phosphoserine. A disordered region spans residues 1044 to 1076; that stretch reads SRPLSCLERPPEGTEGSEPRSRLSLPPRELHPV. Positions 1052–1064 are enriched in basic and acidic residues; the sequence is RPPEGTEGSEPRS.

Interacts with RHOU in a GTP-independent manner.

The protein localises to the cytoplasmic vesicle. Functionally, GTPase-activating protein (GAP) for RAC1 and RHOA, but not for CDC42. The sequence is that of Rho GTPase-activating protein 30 (Arhgap30) from Mus musculus (Mouse).